We begin with the raw amino-acid sequence, 464 residues long: Sugar transporter ERD6-like 1 (464 aa).

Helical transmembrane passes span 23–43 (ITCGLLLSTSVAVTGSFVYGC), 72–92 (VMTLGGMITAAFSGKIAAVIG), 95–115 (QTMWIADVFCIFGWLAVAFAH), 125–145 (GFLGFGVGLISYVVPVYIAEI), 156–176 (FSNQLLQSFGISLMFFTGNFF), 180–200 (TLALLSAIPCGIQMICLFFIP), 263–283 (LIIGLGLMLLQQFCGSSAISA), 298–318 (IGTSILAVILVPQSIIVMFAV), 326–346 (LLMSSSIGLCICSFLIGLSYY), 359–379 (PILIVGLVGYVLSFGIGLGGL), 399–419 (LVTVSNWFFSWIIIFSFNFMM), and 424–444 (FGTYFIFAGVSLMSFVFVWTL).

Belongs to the major facilitator superfamily. Sugar transporter (TC 2.A.1.1) family.

It localises to the membrane. Functionally, sugar transporter. The polypeptide is Sugar transporter ERD6-like 1 (SUGTL4) (Arabidopsis thaliana (Mouse-ear cress)).